The sequence spans 238 residues: SPbeta prophage-derived uncharacterized protein YorM (238 aa).

The N-terminal stretch at 1–37 (MFKKLIDKHKKYVYHRINKMALFATIGLLGVGLVYSA) is a signal peptide. The segment covering 111-121 (TKTKKVQKTNT) has biased composition (basic residues). Residues 111 to 132 (TKTKKVQKTNTKRNLDKAVSKS) are disordered.

This chain is SPbeta prophage-derived uncharacterized protein YorM (yorM), found in Bacillus subtilis (strain 168).